The primary structure comprises 244 residues: Sugar fermentation stimulation protein homolog (244 aa).

This sequence belongs to the SfsA family.

The chain is Sugar fermentation stimulation protein homolog from Dinoroseobacter shibae (strain DSM 16493 / NCIMB 14021 / DFL 12).